Consider the following 908-residue polypeptide: 26S proteasome non-ATPase regulatory subunit 2 (908 aa).

N-acetylmethionine is present on M1. Residues 1 to 52 (MEEGGRDKAPLQPQQPPATSPGSGDEKPSGKERRDAGDKDKEQELSEEDKQL) are disordered. The span at 24-52 (GDEKPSGKERRDAGDKDKEQELSEEDKQL) shows a compositional bias: basic and acidic residues. 2 positions are modified to phosphoserine: S29 and S147. A Phosphotyrosine modification is found at Y194. Phosphoserine is present on residues S361 and S363. PC repeat units lie at residues 409-442 (SAAA…YIKS), 443-479 (GALL…TMRL), 480-514 (GSIF…SMEV), 517-551 (VTAL…TELK), and 560-589 (LGLG…PFRS). K551 is subject to N6-acetyllysine. Basic and acidic residues predominate over residues 623-643 (KEKEEDKDKKEKKDKDKKEAP). The disordered stretch occupies residues 623–645 (KEKEEDKDKKEKKDKDKKEAPAD). PC repeat units follow at residues 692–723 (LALA…EVSY) and 742–757 (AAML…KDPN). Residues 708-903 (DTLSKFSHDA…LEGFVILRKN (196 aa)) are required for interaction with UBLCP1.

The protein belongs to the proteasome subunit S2 family. Component of the 19S proteasome regulatory particle complex. The 26S proteasome consists of a 20S core particle (CP) and two 19S regulatory subunits (RP). The regulatory particle is made of a lid composed of 9 subunits, a base containing 6 ATPases and few additional components including PSMD2. Interacts with RPGRIP1L. Interacts with CRY1 in a KDM8-dependent manner. Interacts (via C-terminus) with phosphatase UBLCP1 (via ubiquitin-like domain); the interaction recruits UBLCP1 to the 19S regulatory particle where it dephosphorylates 19S subunit PSMC2/RPT1 which impairs PSMC2 ATPase activity and disrupts 26S proteasome assembly.

Functionally, component of the 26S proteasome, a multiprotein complex involved in the ATP-dependent degradation of ubiquitinated proteins. This complex plays a key role in the maintenance of protein homeostasis by removing misfolded or damaged proteins, which could impair cellular functions, and by removing proteins whose functions are no longer required. Therefore, the proteasome participates in numerous cellular processes, including cell cycle progression, apoptosis, or DNA damage repair. Binds to the intracellular domain of tumor necrosis factor type 1 receptor. The binding domain of TRAP1 and TRAP2 resides outside the death domain of TNFR1. The sequence is that of 26S proteasome non-ATPase regulatory subunit 2 (PSMD2) from Bos taurus (Bovine).